We begin with the raw amino-acid sequence, 400 residues long: Dihydrolipoyllysine-residue succinyltransferase component of 2-oxoglutarate dehydrogenase complex (400 aa).

Residues 2–77 (GVKIIVPSLG…AVGEEIGDIN (76 aa)) form the Lipoyl-binding domain. K43 bears the N6-lipoyllysine mark. Polar residues predominate over residues 85–97 (NSNEAAKPQTASQ). Residues 85 to 113 (NSNEAAKPQTASQPVPEKVPKKPAVANNT) form a disordered region. The Peripheral subunit-binding (PSBD) domain occupies 113 to 150 (TLAPSVQKLVTENKLDPNNIKGTGKDGRITKGDVLETM). Catalysis depends on residues H371 and D375.

The protein belongs to the 2-oxoacid dehydrogenase family. As to quaternary structure, forms a 24-polypeptide structural core with octahedral symmetry. Part of the 2-oxoglutarate dehydrogenase (OGDH) complex composed of E1 (2-oxoglutarate dehydrogenase), E2 (dihydrolipoamide succinyltransferase) and E3 (dihydrolipoamide dehydrogenase); the complex contains multiple copies of the three enzymatic components (E1, E2 and E3). (R)-lipoate serves as cofactor.

It carries out the reaction N(6)-[(R)-dihydrolipoyl]-L-lysyl-[protein] + succinyl-CoA = N(6)-[(R)-S(8)-succinyldihydrolipoyl]-L-lysyl-[protein] + CoA. The protein operates within amino-acid degradation; L-lysine degradation via saccharopine pathway; glutaryl-CoA from L-lysine: step 6/6. Its function is as follows. E2 component of the 2-oxoglutarate dehydrogenase (OGDH) complex which catalyzes the second step in the conversion of 2-oxoglutarate to succinyl-CoA and CO(2). The polypeptide is Dihydrolipoyllysine-residue succinyltransferase component of 2-oxoglutarate dehydrogenase complex (sucB) (Rickettsia bellii (strain RML369-C)).